We begin with the raw amino-acid sequence, 719 residues long: Polyribonucleotide nucleotidyltransferase (719 aa).

Mg(2+)-binding residues include Asp507 and Asp513. One can recognise a KH domain in the interval Pro573–Ile633. Residues Gly658 to Glu719 enclose the S1 motif domain.

The protein belongs to the polyribonucleotide nucleotidyltransferase family. Requires Mg(2+) as cofactor.

The protein localises to the cytoplasm. The catalysed reaction is RNA(n+1) + phosphate = RNA(n) + a ribonucleoside 5'-diphosphate. Involved in mRNA degradation. Catalyzes the phosphorolysis of single-stranded polyribonucleotides processively in the 3'- to 5'-direction. This Campylobacter jejuni (strain RM1221) protein is Polyribonucleotide nucleotidyltransferase.